A 416-amino-acid polypeptide reads, in one-letter code: 4-hydroxy-3-methylbut-2-en-1-yl diphosphate synthase (flavodoxin) (416 aa).

The [4Fe-4S] cluster site is built by cysteine 304, cysteine 307, cysteine 350, and glutamate 357.

This sequence belongs to the IspG family. Requires [4Fe-4S] cluster as cofactor.

It catalyses the reaction (2E)-4-hydroxy-3-methylbut-2-enyl diphosphate + oxidized [flavodoxin] + H2O + 2 H(+) = 2-C-methyl-D-erythritol 2,4-cyclic diphosphate + reduced [flavodoxin]. It participates in isoprenoid biosynthesis; isopentenyl diphosphate biosynthesis via DXP pathway; isopentenyl diphosphate from 1-deoxy-D-xylulose 5-phosphate: step 5/6. Converts 2C-methyl-D-erythritol 2,4-cyclodiphosphate (ME-2,4cPP) into 1-hydroxy-2-methyl-2-(E)-butenyl 4-diphosphate. This Burkholderia pseudomallei (strain K96243) protein is 4-hydroxy-3-methylbut-2-en-1-yl diphosphate synthase (flavodoxin).